Reading from the N-terminus, the 1404-residue chain is ABC transporter G family member 47 (1404 aa).

Residues 156–423 form the ABC transporter 1 domain; that stretch reads GNALHITRKK…FQSIGFKCPE (268 aa). 189–196 contacts ATP; that stretch reads GPPGSGKT. The region spanning 501–714 is the ABC transmembrane type-2 1 domain; it reads ELLQANIDRE…ALNTLAVNEF (214 aa). 7 helical membrane passes run 519-539, 565-585, 607-627, 638-658, 663-683, 692-712, and 751-771; these read FLYI…MTVF, MIMF…PVFF, TPIS…VIGF, FLAL…IASL, VVAS…SGFI, WWIW…LAVN, and VGAL…CLIF. Residues 808–1059 enclose the ABC transporter 2 domain; that stretch reads ITFEDIKYSI…ELIRYFEAIE (252 aa). 852–859 lines the ATP pocket; the sequence is GVSGAGKT. An ABC transmembrane type-2 2 domain is found at 1132-1346; sequence TQCLACLWKQ…TLNGLVTSQF (215 aa). 7 helical membrane-spanning segments follow: residues 1152–1172, 1183–1199, 1239–1259, 1266–1286, 1298–1318, 1321–1341, and 1373–1393; these read IAVK…MFWG, LFSA…TMGV, LPYI…MIGY, FFWY…YGMM, TVVS…LIPL, IPIW…LNGL, and LLWV…FLFG.

This sequence belongs to the ABC transporter superfamily. ABCG family. PDR (TC 3.A.1.205) subfamily.

Its subcellular location is the membrane. Its function is as follows. May be a general defense protein. The sequence is that of ABC transporter G family member 47 from Oryza sativa subsp. japonica (Rice).